The sequence spans 211 residues: ATP-dependent Clp protease proteolytic subunit 2 (211 aa).

Serine 106 acts as the Nucleophile in catalysis. The active site involves histidine 131.

Belongs to the peptidase S14 family. In terms of assembly, fourteen ClpP subunits assemble into 2 heptameric rings which stack back to back to give a disk-like structure with a central cavity, resembling the structure of eukaryotic proteasomes.

Its subcellular location is the cytoplasm. It carries out the reaction Hydrolysis of proteins to small peptides in the presence of ATP and magnesium. alpha-casein is the usual test substrate. In the absence of ATP, only oligopeptides shorter than five residues are hydrolyzed (such as succinyl-Leu-Tyr-|-NHMec, and Leu-Tyr-Leu-|-Tyr-Trp, in which cleavage of the -Tyr-|-Leu- and -Tyr-|-Trp bonds also occurs).. Cleaves peptides in various proteins in a process that requires ATP hydrolysis. Has a chymotrypsin-like activity. Plays a major role in the degradation of misfolded proteins. This is ATP-dependent Clp protease proteolytic subunit 2 from Bradyrhizobium diazoefficiens (strain JCM 10833 / BCRC 13528 / IAM 13628 / NBRC 14792 / USDA 110).